The chain runs to 354 residues: Mitogen-activated protein kinase kinase 1 (354 aa).

The Protein kinase domain occupies 68 to 328; it reads LEVIKVIGKG…AKELLEHKFV (261 aa). ATP is bound by residues 74–82 and Lys97; that span reads IGKGSSGNV. The Proton acceptor role is filled by Asp190. Thr218 is subject to Phosphothreonine. Ser224 carries the post-translational modification Phosphoserine. Thr228 carries the post-translational modification Phosphothreonine.

The protein belongs to the protein kinase superfamily. STE Ser/Thr protein kinase family. MAP kinase kinase subfamily. Interacts with MEKK1 and MPK4. May form a ternary complex composed of MEKK1 and MKK1/MKK2 and MPK4. Interacts with P.syringae type III effector HopF2. Interacts with MPK11. Post-translationally, phosphorylation at Thr-218 and Ser-224 by MAP kinase kinase kinases positively regulates kinase activity. As to expression, expressed in roots, stem, flowers and siliques.

The enzyme catalyses L-seryl-[protein] + ATP = O-phospho-L-seryl-[protein] + ADP + H(+). It catalyses the reaction L-threonyl-[protein] + ATP = O-phospho-L-threonyl-[protein] + ADP + H(+). The catalysed reaction is L-tyrosyl-[protein] + ATP = O-phospho-L-tyrosyl-[protein] + ADP + H(+). Activated through serine and threonine phosphorylation in response to wounding, cold, drought, salt stresses, abscisic acid (ABA), hydrogen peroxide, bacterial flagellin and laminarin beta-glucan. In terms of biological role, MEKK1, MKK1/MKK2 and MPK4/MPK6 function in a signaling pathway that modulates the expression of genes responding to biotic and abiotic stresses and also plays an important role in pathogen defense by negatively regulating innate immunity. Activates by phosphorylation the downstream MPK4. Acts redundantly with MKK2. MKK1-MPK6 module mediates abscisic acid (ABA)-dependent CAT1 expression with H(2)O(2) production and response to drought and salt stress. MKK1-MPK6 module is also involved in sugar signaling during the process of seed germination. This is Mitogen-activated protein kinase kinase 1 (MKK1) from Arabidopsis thaliana (Mouse-ear cress).